The chain runs to 432 residues: Enolase (432 aa).

Position 163 (Gln-163) interacts with (2R)-2-phosphoglycerate. The active-site Proton donor is the Glu-205. 3 residues coordinate Mg(2+): Asp-242, Glu-285, and Asp-312. The (2R)-2-phosphoglycerate site is built by Lys-337, Arg-366, Ser-367, and Lys-388. The active-site Proton acceptor is the Lys-337.

Belongs to the enolase family. Mg(2+) is required as a cofactor.

The protein localises to the cytoplasm. The protein resides in the secreted. It localises to the cell surface. The catalysed reaction is (2R)-2-phosphoglycerate = phosphoenolpyruvate + H2O. The protein operates within carbohydrate degradation; glycolysis; pyruvate from D-glyceraldehyde 3-phosphate: step 4/5. Catalyzes the reversible conversion of 2-phosphoglycerate (2-PG) into phosphoenolpyruvate (PEP). It is essential for the degradation of carbohydrates via glycolysis. The protein is Enolase of Bifidobacterium longum subsp. infantis (strain ATCC 15697 / DSM 20088 / JCM 1222 / NCTC 11817 / S12).